We begin with the raw amino-acid sequence, 578 residues long: Frizzled-2 (578 aa).

An N-terminal signal peptide occupies residues 1-17 (MLLRISVLFLLLGSCGA). Topologically, residues 18-236 (LFGKRQKCEQ…AESHSLVSNW (219 aa)) are extracellular. An FZ domain is found at 20-144 (GKRQKCEQIT…MSTGNICAAP (125 aa)). 5 disulfides stabilise this stretch: cysteine 25–cysteine 86, cysteine 33–cysteine 79, cysteine 70–cysteine 108, cysteine 97–cysteine 141, and cysteine 101–cysteine 125. Residue asparagine 39 is glycosylated (N-linked (GlcNAc...) asparagine). The interval 138–175 (GNICAAPPDTPKKQHKGHHHKNQNQNQNQNHNYSPDGP) is disordered. The segment covering 150–159 (KQHKGHHHKN) has biased composition (basic residues). The span at 160–169 (QNQNQNQNHN) shows a compositional bias: low complexity. Asparagine 213 carries N-linked (GlcNAc...) asparagine glycosylation. The chain crosses the membrane as a helical span at residues 237–257 (MAFWSITCCVLASFTFLTFLI). Topologically, residues 258–268 (ETDRFQYPERP) are cytoplasmic. The helical transmembrane segment at 269–289 (IFMLAFCQLMVAVGFMIRYFV) threads the bilayer. The Extracellular segment spans residues 290 to 312 (GHEEIACDSMRIKGADDNSGSLC). The helical transmembrane segment at 313-333 (FVVFLLTYFFGMAASVWWVIL) threads the bilayer. Topologically, residues 334–354 (SLTWVLSAASKWSPEAISSFS) are cytoplasmic. Residues 355–375 (FHFHVVGWCLPAIQTVLVIVF) traverse the membrane as a helical segment. Residues 376–398 (NAIDGDPITGICYVGNTDLQFQR) are Extracellular-facing. A helical transmembrane segment spans residues 399–419 (IFVLFPLLVYFIVGVLFLVIG). Topologically, residues 420 to 449 (FCNLWSIRNEVQKQHPSLESAHKITQLMSK) are cytoplasmic. Residues 450–470 (IGIFSLLYTIPSLLIICVLFY) traverse the membrane as a helical segment. At 471-497 (EQNHRSLWEQSQLCSCSPKQTIGDSSL) the chain is on the extracellular side. Residues 498–518 (IISLIKTCCMCILGWTSGFWV) form a helical membrane-spanning segment. At 519 to 578 (CSTKTLSSWKNAICCLGSSRSLPKYQPADILYAKSDMSSSQFYNTSLRHNHLYGGIPDKL) the chain is on the cytoplasmic side. The Lys-Thr-X-X-X-Trp motif, mediates interaction with the PDZ domain of Dvl family members signature appears at 522-527 (KTLSSW). Residues 556 to 558 (SSS) carry the PDZ-binding motif.

Belongs to the G-protein coupled receptor Fz/Smo family. As to expression, expressed in two pairs of head neurons and throughout the pharynx.

It localises to the cell membrane. Its function is as follows. Receptor for Wnt proteins. Most frizzled receptors are coupled to the beta-catenin canonical signaling pathway, which leads to the activation of disheveled proteins, inhibition of gsk-3 kinase, nuclear accumulation of beta-catenin and activation of Wnt target genes. A second signaling pathway involving PKC and calcium fluxes has been seen for some family members, but it is not yet clear if it represents a distinct pathway or if it can be integrated in the canonical pathway, as PKC seems to be required for Wnt-mediated inactivation of gsk-3 kinase. Both pathways seem to involve interactions with G-proteins. Required for the migration and axon formation and guidance of different neuronal cell types including canal-associated neurons (CAN), hermaphrodite-specific neurons (HSN), anterior lateral microtubule neurons (ALM), and the right Q neuroblast (QR) and its descendants. Directs ALM migration through frizzled protein mom-5 and Wnt ligands cwn-1, cwn-2 and egl-20. May act redundantly with mom-5 to direct CAN migration. Plays a role in the organization of head ganglion cells. Probably by acting as a receptor for Wnt ligand cwn-2, plays a role in the positioning of the nerve ring and may in addition positively regulate the neurite outgrowth of RME GABAergic motor neurons along the anterior-posterior axis of the body. The protein is Frizzled-2 of Caenorhabditis elegans.